A 209-amino-acid chain; its full sequence is Kynurenine formamidase (209 aa).

Phe-18 serves as a coordination point for substrate. Zn(2+) is bound by residues His-48, His-52, and Asp-54. Residue His-58 is the Proton donor/acceptor of the active site. Zn(2+) contacts are provided by His-160 and Glu-172.

This sequence belongs to the Cyclase 1 superfamily. KynB family. In terms of assembly, homodimer. Zn(2+) serves as cofactor.

The enzyme catalyses N-formyl-L-kynurenine + H2O = L-kynurenine + formate + H(+). Its pathway is amino-acid degradation; L-tryptophan degradation via kynurenine pathway; L-kynurenine from L-tryptophan: step 2/2. Catalyzes the hydrolysis of N-formyl-L-kynurenine to L-kynurenine, the second step in the kynurenine pathway of tryptophan degradation. The chain is Kynurenine formamidase from Bordetella petrii (strain ATCC BAA-461 / DSM 12804 / CCUG 43448).